Consider the following 260-residue polypeptide: UPF0246 protein Bxeno_A1262 (260 aa).

It belongs to the UPF0246 family.

The polypeptide is UPF0246 protein Bxeno_A1262 (Paraburkholderia xenovorans (strain LB400)).